Consider the following 469-residue polypeptide: Asparagine--tRNA ligase (469 aa).

Belongs to the class-II aminoacyl-tRNA synthetase family. Homodimer.

It localises to the cytoplasm. The catalysed reaction is tRNA(Asn) + L-asparagine + ATP = L-asparaginyl-tRNA(Asn) + AMP + diphosphate + H(+). The chain is Asparagine--tRNA ligase from Porphyromonas gingivalis (strain ATCC BAA-308 / W83).